We begin with the raw amino-acid sequence, 256 residues long: 1-(5-phosphoribosyl)-5-[(5-phosphoribosylamino)methylideneamino] imidazole-4-carboxamide isomerase (256 aa).

Catalysis depends on Asp8, which acts as the Proton acceptor. The active-site Proton donor is the Asp129.

The protein belongs to the HisA/HisF family.

The protein resides in the cytoplasm. It carries out the reaction 1-(5-phospho-beta-D-ribosyl)-5-[(5-phospho-beta-D-ribosylamino)methylideneamino]imidazole-4-carboxamide = 5-[(5-phospho-1-deoxy-D-ribulos-1-ylimino)methylamino]-1-(5-phospho-beta-D-ribosyl)imidazole-4-carboxamide. It participates in amino-acid biosynthesis; L-histidine biosynthesis; L-histidine from 5-phospho-alpha-D-ribose 1-diphosphate: step 4/9. The polypeptide is 1-(5-phosphoribosyl)-5-[(5-phosphoribosylamino)methylideneamino] imidazole-4-carboxamide isomerase (Synechococcus elongatus (strain ATCC 33912 / PCC 7942 / FACHB-805) (Anacystis nidulans R2)).